The chain runs to 82 residues: Small ribosomal subunit protein bS20 (82 aa).

Basic residues predominate over residues 1 to 11 (MANHKSALKRI). The tract at residues 1 to 20 (MANHKSALKRIRSNETKRLR) is disordered.

It belongs to the bacterial ribosomal protein bS20 family.

In terms of biological role, binds directly to 16S ribosomal RNA. The protein is Small ribosomal subunit protein bS20 of Christiangramia forsetii (strain DSM 17595 / CGMCC 1.15422 / KT0803) (Gramella forsetii).